The primary structure comprises 255 residues: Small ribosomal subunit protein eS1 (255 aa).

Residues M1–K18 show a composition bias toward basic residues. Residues M1–D28 are disordered. The residue at position 2 (A2) is an N-acetylalanine; partial. Residues R19–D28 show a composition bias toward basic and acidic residues.

It belongs to the eukaryotic ribosomal protein eS1 family. In terms of assembly, component of the small ribosomal subunit. Mature ribosomes consist of a small (40S) and a large (60S) subunit. The 40S subunit contains about 33 different proteins and 1 molecule of RNA (18S). The 60S subunit contains about 49 different proteins and 3 molecules of RNA (25S, 5.8S and 5S).

It is found in the cytoplasm. This chain is Small ribosomal subunit protein eS1, found in Ajellomyces capsulatus (strain H143) (Darling's disease fungus).